The following is a 194-amino-acid chain: MRISTVDRRQQLIDAAIRVIRRDGVESASLRTIASEAKASLAAVHVCFTNKDELMQAAAAELLQQLVRSIPRVVDGSEDVRAIAHRVMDLFWAQMVSDELNILAQFEIGIWAKRNPHHGDLSRTVYSDYEKEISKLLVAAAKRQKQTIAARNVARALIVIMDGCSLQYFADPSDPRHKDLCDNLVDAYLDRVGL.

Residues 6 to 66 (VDRRQQLIDA…AAAAELLQQL (61 aa)) form the HTH tetR-type domain. Residues 29–48 (SLRTIASEAKASLAAVHVCF) constitute a DNA-binding region (H-T-H motif).

Homodimer.

Its activity is regulated as follows. 6-hydroxy-D-nicotine and 6-hydroxy-L-nicotine prevent HdnoR from binding to the IR1 DNA. Both 6-hydroxy-nicotine enantiomers prevent DNA-protein complex formation at micromolar concentrations, with the D-enantiomer being twice as potent as the L-enantiomer. A thousand-fold higher L-nicotine concentration is required to elicit a similar effect. Functionally, represses expression of the 6-hydroxy-D-nicotine oxidase (6-hdno). Acts by binding to a gene operator site consisting of two inverted repeats, IR1 (covering the 6-hdno promoter region) and IR2 (situated upstream from the 6-hdno promoter). Binding to one site may stimulate binding of the protein to the second site. This Paenarthrobacter nicotinovorans (Arthrobacter nicotinovorans) protein is HTH-type nicotine-responsive transcriptional repressor HdnoR.